A 486-amino-acid polypeptide reads, in one-letter code: Protein nucleotidyltransferase YdiU (486 aa).

Residues Gly90, Gly92, Arg93, Lys113, Asp125, Gly126, Arg176, and Arg183 each contribute to the ATP site. The active-site Proton acceptor is the Asp252. The Mg(2+) site is built by Asn253 and Asp262. Residue Asp262 coordinates ATP.

The protein belongs to the SELO family. Requires Mg(2+) as cofactor. Mn(2+) serves as cofactor.

The enzyme catalyses L-seryl-[protein] + ATP = 3-O-(5'-adenylyl)-L-seryl-[protein] + diphosphate. It carries out the reaction L-threonyl-[protein] + ATP = 3-O-(5'-adenylyl)-L-threonyl-[protein] + diphosphate. The catalysed reaction is L-tyrosyl-[protein] + ATP = O-(5'-adenylyl)-L-tyrosyl-[protein] + diphosphate. It catalyses the reaction L-histidyl-[protein] + UTP = N(tele)-(5'-uridylyl)-L-histidyl-[protein] + diphosphate. The enzyme catalyses L-seryl-[protein] + UTP = O-(5'-uridylyl)-L-seryl-[protein] + diphosphate. It carries out the reaction L-tyrosyl-[protein] + UTP = O-(5'-uridylyl)-L-tyrosyl-[protein] + diphosphate. Its function is as follows. Nucleotidyltransferase involved in the post-translational modification of proteins. It can catalyze the addition of adenosine monophosphate (AMP) or uridine monophosphate (UMP) to a protein, resulting in modifications known as AMPylation and UMPylation. This Pseudomonas putida (strain ATCC 700007 / DSM 6899 / JCM 31910 / BCRC 17059 / LMG 24140 / F1) protein is Protein nucleotidyltransferase YdiU.